The sequence spans 238 residues: Zinc finger protein ZAT6 (238 aa).

Residues 1-15 (MALETLTSPRLSSPM) show a composition bias toward polar residues. The tract at residues 1 to 42 (MALETLTSPRLSSPMPTLFQDSALGFHGSKGKRSKRSRSEFD) is disordered. Residues 30–38 (KGKRSKRSR) carry the Nuclear localization signal motif. C2H2-type zinc fingers lie at residues 89–111 (YKCSVCDKAFSSYQALGGHKASH) and 148–170 (HVCSICHKSFATGQALGGHKRCH). The tract at residues 175 to 202 (NGGGVSSSVSNSEDVGSTSHVSSGHRGF) is disordered. A compositionally biased stretch (low complexity) spans 180-193 (SSSVSNSEDVGSTS).

The protein resides in the nucleus. Probable transcription factor that regulates root development and phosphate (Pi) acquisition and homeostasis. Probably acts as a repressor of primary root growth and regulates Pi homeostasis through the control of root architecture. The sequence is that of Zinc finger protein ZAT6 (ZAT6) from Arabidopsis thaliana (Mouse-ear cress).